The following is a 277-amino-acid chain: 4-hydroxy-3-methylbut-2-enyl diphosphate reductase (277 aa).

Cys-12 contributes to the [4Fe-4S] cluster binding site. (2E)-4-hydroxy-3-methylbut-2-enyl diphosphate is bound by residues His-36 and His-70. Dimethylallyl diphosphate is bound by residues His-36 and His-70. Isopentenyl diphosphate-binding residues include His-36 and His-70. Cys-92 lines the [4Fe-4S] cluster pocket. His-120 is a (2E)-4-hydroxy-3-methylbut-2-enyl diphosphate binding site. A dimethylallyl diphosphate-binding site is contributed by His-120. His-120 provides a ligand contact to isopentenyl diphosphate. The active-site Proton donor is the Glu-122. Residue Thr-158 coordinates (2E)-4-hydroxy-3-methylbut-2-enyl diphosphate. Cys-186 is a binding site for [4Fe-4S] cluster. (2E)-4-hydroxy-3-methylbut-2-enyl diphosphate-binding residues include Ser-214, Asn-216, and Ser-258. Ser-214, Asn-216, and Ser-258 together coordinate dimethylallyl diphosphate. Residues Ser-214, Asn-216, and Ser-258 each coordinate isopentenyl diphosphate.

Belongs to the IspH family. It depends on [4Fe-4S] cluster as a cofactor.

It catalyses the reaction isopentenyl diphosphate + 2 oxidized [2Fe-2S]-[ferredoxin] + H2O = (2E)-4-hydroxy-3-methylbut-2-enyl diphosphate + 2 reduced [2Fe-2S]-[ferredoxin] + 2 H(+). It carries out the reaction dimethylallyl diphosphate + 2 oxidized [2Fe-2S]-[ferredoxin] + H2O = (2E)-4-hydroxy-3-methylbut-2-enyl diphosphate + 2 reduced [2Fe-2S]-[ferredoxin] + 2 H(+). Its pathway is isoprenoid biosynthesis; dimethylallyl diphosphate biosynthesis; dimethylallyl diphosphate from (2E)-4-hydroxy-3-methylbutenyl diphosphate: step 1/1. It participates in isoprenoid biosynthesis; isopentenyl diphosphate biosynthesis via DXP pathway; isopentenyl diphosphate from 1-deoxy-D-xylulose 5-phosphate: step 6/6. Catalyzes the conversion of 1-hydroxy-2-methyl-2-(E)-butenyl 4-diphosphate (HMBPP) into a mixture of isopentenyl diphosphate (IPP) and dimethylallyl diphosphate (DMAPP). Acts in the terminal step of the DOXP/MEP pathway for isoprenoid precursor biosynthesis. In Campylobacter jejuni subsp. jejuni serotype O:6 (strain 81116 / NCTC 11828), this protein is 4-hydroxy-3-methylbut-2-enyl diphosphate reductase.